A 362-amino-acid polypeptide reads, in one-letter code: MEVHNVSAPFNFSLPPGFGHRATDKALSIILVLMLLLIMLSLGCTMEFSKIKAHLWKPKGVIVALVAQFGIMPLAAFLLGKIFHLSNIEALAILICGCSPGGNLSNLFTLAMKGDMNLSIVMTTCSSFSALGMMPLLLYVYSKGIYDGDLKDKVPYKGIMISLVIVLIPCTIGIVLKSKRPHYVPYILKGGMIITFLLSVAVTALSVINVGNSIMFVMTPHLLATSSLMPFSGFLMGYILSALFQLNPSCRRTISMETGFQNIQLCSTILNVTFPPEVIGPLFFFPLLYMIFQLAEGLLIIIIFRCYEKIKPPKDQTKITYKAAATEDATPAALEKGTHNGNIPPLQPGPSPNGLNSGQMAN.

At 1-22 (MEVHNVSAPFNFSLPPGFGHRA) the chain is on the extracellular side. Asn5 and Asn11 each carry an N-linked (GlcNAc...) asparagine glycan. Residues 23–44 (TDKALSIILVLMLLLIMLSLGC) form a helical membrane-spanning segment. Residues 45-47 (TME) lie on the Cytoplasmic side of the membrane. The helical transmembrane segment at 48-83 (FSKIKAHLWKPKGVIVALVAQFGIMPLAAFLLGKIF) threads the bilayer. Residues 84–86 (HLS) lie on the Extracellular side of the membrane. The chain crosses the membrane as a discontinuously helical span at residues 87 to 112 (NIEALAILICGCSPGGNLSNLFTLAM). At 113–115 (KGD) the chain is on the cytoplasmic side. A helical membrane pass occupies residues 116 to 142 (MNLSIVMTTCSSFSALGMMPLLLYVYS). Residues 143–156 (KGIYDGDLKDKVPY) lie on the Extracellular side of the membrane. Residues 157 to 179 (KGIMISLVIVLIPCTIGIVLKSK) traverse the membrane as a helical segment. Topologically, residues 180–183 (RPHY) are cytoplasmic. Residues 184–217 (VPYILKGGMIITFLLSVAVTALSVINVGNSIMFV) form a helical membrane-spanning segment. The Extracellular portion of the chain corresponds to 218–219 (MT). Residues 220–243 (PHLLATSSLMPFSGFLMGYILSAL) traverse the membrane as a helical segment. At 244–247 (FQLN) the chain is on the cytoplasmic side. A discontinuously helical transmembrane segment spans residues 248–273 (PSCRRTISMETGFQNIQLCSTILNVT). Topologically, residues 274 to 280 (FPPEVIG) are extracellular. Residues 281-311 (PLFFFPLLYMIFQLAEGLLIIIIFRCYEKIK) traverse the membrane as a helical segment. Topologically, residues 312 to 362 (PPKDQTKITYKAAATEDATPAALEKGTHNGNIPPLQPGPSPNGLNSGQMAN) are cytoplasmic. Position 330 is a phosphothreonine (Thr330). Positions 333–362 (ALEKGTHNGNIPPLQPGPSPNGLNSGQMAN) are disordered. The segment covering 353-362 (NGLNSGQMAN) has biased composition (polar residues).

It belongs to the bile acid:sodium symporter (BASS) (TC 2.A.28) family. In terms of tissue distribution, highly expressed in liver and low expression in kidney.

The protein resides in the cell membrane. It catalyses the reaction taurocholate(out) + 2 Na(+)(out) = taurocholate(in) + 2 Na(+)(in). It carries out the reaction taurochenodeoxycholate(out) + 2 Na(+)(out) = taurochenodeoxycholate(in) + 2 Na(+)(in). The catalysed reaction is tauroursodeoxycholate(out) + 2 Na(+)(out) = tauroursodeoxycholate(in) + 2 Na(+)(in). The enzyme catalyses glycocholate(out) + 2 Na(+)(out) = glycocholate(in) + 2 Na(+)(in). It catalyses the reaction estrone 3-sulfate(out) + 2 Na(+)(out) = estrone 3-sulfate(in) + 2 Na(+)(in). It carries out the reaction cholate(out) + 2 Na(+)(out) = cholate(in) + 2 Na(+)(in). The catalysed reaction is tauronorcholate(out) + 2 Na(+)(out) = tauronorcholate(in) + 2 Na(+)(in). The enzyme catalyses taurodeoxycholate(out) + 2 Na(+)(out) = taurodeoxycholate(in) + 2 Na(+)(in). It catalyses the reaction tauroallocholate(out) + 2 Na(+)(out) = tauroallocholate(in) + 2 Na(+)(in). It carries out the reaction taurohyodeoxycholate(out) + 2 Na(+)(out) = taurohyodeoxycholate(in) + 2 Na(+)(in). The catalysed reaction is taurohyocholate(out) + 2 Na(+)(out) = taurohyocholate(in) + 2 Na(+)(in). The enzyme catalyses tauro-beta-muricholate(out) + 2 Na(+)(out) = tauro-beta-muricholate(in) + 2 Na(+)(in). The transport of bile acids is sodium-dependent. Functionally, as a major transporter of conjugated bile salts from plasma into the hepatocyte, it plays a key role in the enterohepatic circulation of bile salts necessary for the solubilization and absorption of dietary fat and fat-soluble vitamins. It is strictly dependent on the extracellular presence of sodium. It exhibits broad substrate specificity and transports various bile acids, such as taurocholate, cholate, as well as non-bile acid organic compounds, such as estrone sulfate. Works collaboratively with the ileal transporter (NTCP2), the organic solute transporter (OST), and the bile salt export pump (BSEP), to ensure efficacious biological recycling of bile acids during enterohepatic circulation. This is Hepatic sodium/bile acid cotransporter (Slc10a1) from Rattus norvegicus (Rat).